Reading from the N-terminus, the 333-residue chain is Acetyl-coenzyme A carboxylase carboxyl transferase subunit alpha (333 aa).

The 261-residue stretch at 48–308 (LLEQKVDALR…KEMLVEELRD (261 aa)) folds into the CoA carboxyltransferase C-terminal domain.

The protein belongs to the AccA family. In terms of assembly, acetyl-CoA carboxylase is a heterohexamer composed of biotin carboxyl carrier protein (AccB), biotin carboxylase (AccC) and two subunits each of ACCase subunit alpha (AccA) and ACCase subunit beta (AccD).

It localises to the cytoplasm. It carries out the reaction N(6)-carboxybiotinyl-L-lysyl-[protein] + acetyl-CoA = N(6)-biotinyl-L-lysyl-[protein] + malonyl-CoA. It participates in lipid metabolism; malonyl-CoA biosynthesis; malonyl-CoA from acetyl-CoA: step 1/1. Component of the acetyl coenzyme A carboxylase (ACC) complex. First, biotin carboxylase catalyzes the carboxylation of biotin on its carrier protein (BCCP) and then the CO(2) group is transferred by the carboxyltransferase to acetyl-CoA to form malonyl-CoA. The chain is Acetyl-coenzyme A carboxylase carboxyl transferase subunit alpha from Chlorobium limicola (strain DSM 245 / NBRC 103803 / 6330).